The chain runs to 84 residues: MSSVVKKPLGGNTDTGDHHNQKTEWPELVGKSVEEAKKVILQDKSEAQIVVLPVGTIVTMEYRIDRVRLFVDSLDKIAQVPRVG.

A signal peptide spans 1–12; sequence MSSVVKKPLGGN. The segment at 1–28 is disordered; sequence MSSVVKKPLGGNTDTGDHHNQKTEWPEL. The span at 15-25 shows a compositional bias: basic and acidic residues; the sequence is TGDHHNQKTEW.

As to quaternary structure, monomer.

The protein localises to the secreted. Its function is as follows. Inhibits B.lichenoformis subtilisin, B.subtilis subtilisin, bovine pancreatic alpha-chymotrypsin and porcine alpha-chymotrypsin with Ki of 3.92 nM, 5.70 nM, 7.24 nM and 9.35 nM respectively. B.lichenoformis subtilisin is inhibited with a molar ratio of 1:0.87. Also inhibits chymotrypsin-like activities from the digestive tracts of the insect larvae T.molitor, P.interpunctella and H.armigera. Does not inhibit bovine pancreatic trypsin, porcine pancreatic elastase, or human leukocyte elastase. The sequence is that of Subtilisin-chymotrypsin inhibitor WSCI from Triticum aestivum (Wheat).